Reading from the N-terminus, the 553-residue chain is Phospholipase B-like 1 (553 aa).

An N-terminal signal peptide occupies residues 1-38 (MTRGGPGGRPGLPQPPPLLLLLLLLPLLLVTAEPPKPA). An N-linked (GlcNAc...) (high mannose) asparagine; alternate glycan is attached at Asn71. Asn71 carries an N-linked (GlcNAc...) (hybrid) asparagine; alternate glycan. A propeptide spans 209–227 (LSPTKNGSLKVFKRWDMGH) (removed in mature form). 2 N-linked (GlcNAc...) (high mannose) asparagine; alternate glycosylation sites follow: Asn308 and Asn366. 2 N-linked (GlcNAc...) (hybrid) asparagine; alternate glycosylation sites follow: Asn308 and Asn366. An N-linked (GlcNAc...) asparagine glycan is attached at Asn411. 2 disulfides stabilise this stretch: Cys470/Cys475 and Cys474/Cys489. A glycan (N-linked (GlcNAc...) (high mannose) asparagine; alternate) is linked at Asn526. Asn526 is a glycosylation site (N-linked (GlcNAc...) (hybrid) asparagine; alternate).

Belongs to the phospholipase B-like family. May form a homodimer, each monomer is composed of a chain A and a chain B. The maturation cleavages that produces chains A and B are required to open the putative substrate binding pocket. Both chains A and B remain associated in the mature protein. As to expression, expressed in neutrophils and monocytes.

The protein resides in the lysosome. In terms of biological role, in view of the small size of the putative binding pocket, it has been proposed that it may act as an amidase or a peptidase. Exhibits a weak phospholipase activity, acting on various phospholipids, including phosphatidylcholine, phosphatidylinositol, phosphatidylethanolamine and lysophospholipids. This chain is Phospholipase B-like 1 (PLBD1), found in Homo sapiens (Human).